The chain runs to 232 residues: Small ribosomal subunit protein uS2 (232 aa).

The protein belongs to the universal ribosomal protein uS2 family.

The sequence is that of Small ribosomal subunit protein uS2 from Baumannia cicadellinicola subsp. Homalodisca coagulata.